The primary structure comprises 246 residues: 1-(5-phosphoribosyl)-5-[(5-phosphoribosylamino)methylideneamino] imidazole-4-carboxamide isomerase (246 aa).

The active-site Proton acceptor is D8. D130 acts as the Proton donor in catalysis.

This sequence belongs to the HisA/HisF family.

The protein resides in the cytoplasm. It catalyses the reaction 1-(5-phospho-beta-D-ribosyl)-5-[(5-phospho-beta-D-ribosylamino)methylideneamino]imidazole-4-carboxamide = 5-[(5-phospho-1-deoxy-D-ribulos-1-ylimino)methylamino]-1-(5-phospho-beta-D-ribosyl)imidazole-4-carboxamide. The protein operates within amino-acid biosynthesis; L-histidine biosynthesis; L-histidine from 5-phospho-alpha-D-ribose 1-diphosphate: step 4/9. The protein is 1-(5-phosphoribosyl)-5-[(5-phosphoribosylamino)methylideneamino] imidazole-4-carboxamide isomerase of Hydrogenovibrio crunogenus (strain DSM 25203 / XCL-2) (Thiomicrospira crunogena).